Here is a 534-residue protein sequence, read N- to C-terminus: Bifunctional purine biosynthesis protein PurH (534 aa).

Residues 1-148 (MNTVRPIRRA…KNHQDVTIVV (148 aa)) enclose the MGS-like domain.

The protein belongs to the PurH family.

It carries out the reaction (6R)-10-formyltetrahydrofolate + 5-amino-1-(5-phospho-beta-D-ribosyl)imidazole-4-carboxamide = 5-formamido-1-(5-phospho-D-ribosyl)imidazole-4-carboxamide + (6S)-5,6,7,8-tetrahydrofolate. The catalysed reaction is IMP + H2O = 5-formamido-1-(5-phospho-D-ribosyl)imidazole-4-carboxamide. It participates in purine metabolism; IMP biosynthesis via de novo pathway; 5-formamido-1-(5-phospho-D-ribosyl)imidazole-4-carboxamide from 5-amino-1-(5-phospho-D-ribosyl)imidazole-4-carboxamide (10-formyl THF route): step 1/1. Its pathway is purine metabolism; IMP biosynthesis via de novo pathway; IMP from 5-formamido-1-(5-phospho-D-ribosyl)imidazole-4-carboxamide: step 1/1. This is Bifunctional purine biosynthesis protein PurH from Shewanella denitrificans (strain OS217 / ATCC BAA-1090 / DSM 15013).